The following is a 202-amino-acid chain: ATP-dependent Clp protease proteolytic subunit 2 (202 aa).

Residue Ser-99 is the Nucleophile of the active site. Residue His-124 is part of the active site.

The protein belongs to the peptidase S14 family. Fourteen ClpP subunits assemble into 2 heptameric rings which stack back to back to give a disk-like structure with a central cavity, resembling the structure of eukaryotic proteasomes.

It localises to the cytoplasm. It catalyses the reaction Hydrolysis of proteins to small peptides in the presence of ATP and magnesium. alpha-casein is the usual test substrate. In the absence of ATP, only oligopeptides shorter than five residues are hydrolyzed (such as succinyl-Leu-Tyr-|-NHMec, and Leu-Tyr-Leu-|-Tyr-Trp, in which cleavage of the -Tyr-|-Leu- and -Tyr-|-Trp bonds also occurs).. Cleaves peptides in various proteins in a process that requires ATP hydrolysis. Has a chymotrypsin-like activity. Plays a major role in the degradation of misfolded proteins. This Desulfitobacterium hafniense (strain Y51) protein is ATP-dependent Clp protease proteolytic subunit 2.